A 420-amino-acid chain; its full sequence is Structure-specific endonuclease subunit SLX1 homolog (420 aa).

A GIY-YIG domain is found at 19-106 (SSDNTYPWQN…QHPLKSRRLR (88 aa)). Disordered regions lie at residues 237 to 306 (SVEE…AAVN) and 311 to 330 (DDSADDGTTDGNEDGPDDVA). Residues 247 to 266 (PSSCSVPPSTGSSAAPTPGA) show a composition bias toward low complexity. Positions 279 to 301 (VDPRLDSDDRDDNHQFESPDNHE) are enriched in basic and acidic residues. The span at 311–327 (DDSADDGTTDGNEDGPD) shows a compositional bias: acidic residues. An SLX1-type zinc finger spans residues 348 to 405 (CGHCHQSVYQELCIVCLNATCTYRAHLLCAAQAAVHPLGQSSPSETRLVPLRHSCPRC).

This sequence belongs to the SLX1 family. As to quaternary structure, forms a heterodimer with a member of the SLX4 family. The cofactor is a divalent metal cation.

The protein resides in the nucleus. Catalytic subunit of a heterodimeric structure-specific endonuclease that resolves DNA secondary structures generated during DNA repair and recombination. Has endonuclease activity towards branched DNA substrates, introducing single-strand cuts in duplex DNA close to junctions with ss-DNA. In Monosiga brevicollis (Choanoflagellate), this protein is Structure-specific endonuclease subunit SLX1 homolog.